Here is a 329-residue protein sequence, read N- to C-terminus: Ephrin-B1 (329 aa).

The signal sequence occupies residues 1–20 (MEGLRRLLGLLLVLYRLCSA). The Extracellular segment spans residues 21-226 (LGKNLEPVTW…FFNSKIAVFA (206 aa)). One can recognise an Ephrin RBD domain in the interval 23-157 (KNLEPVTWNS…TRSMKIIMKV (135 aa)). Cystine bridges form between cysteine 57–cysteine 94 and cysteine 82–cysteine 146. N-linked (GlcNAc...) asparagine glycosylation occurs at asparagine 132. The tract at residues 163–192 (AVPPEQLTTTRPSKEADNTGKIATFGPWNG) is disordered. Residue asparagine 203 is glycosylated (N-linked (GlcNAc...) asparagine). The helical transmembrane segment at 227-247 (AIGAGCVIFILIIIFLVVLLI) threads the bilayer. The Cytoplasmic segment spans residues 248 to 329 (KIRKRHRKHT…QSPANIYYKV (82 aa)). The short motif at 327–329 (YKV) is the PDZ-binding element.

The protein belongs to the ephrin family. As to quaternary structure, interacts with TLE4 through the PDZ-binding motif. Post-translationally, inducible phosphorylation of tyrosine residues in the cytoplasmic domain. Tyrosine phosphorylation inhibits TLE4-binding. In terms of tissue distribution, expressed at low levels in most tissues with highest levels in the kidney, oocytes, ovary and testis.

The protein localises to the membrane. In terms of biological role, cell surface transmembrane ligand for Eph receptors, a family of receptor tyrosine kinases which are crucial for migration, repulsion and adhesion during neuronal, vascular and epithelial development. Binds promiscuously Eph receptors residing on adjacent cells, leading to contact-dependent bidirectional signaling into neighboring cells. The signaling pathway downstream of the receptor is referred to as forward signaling while the signaling pathway downstream of the ephrin ligand is referred to as reverse signaling. May have a role in the developing mesenchymal and nervous tissue. The polypeptide is Ephrin-B1 (efnb1) (Xenopus laevis (African clawed frog)).